Reading from the N-terminus, the 205-residue chain is Urease accessory protein UreG (205 aa).

Residue 10-17 (GPVGAGKT) participates in GTP binding.

Belongs to the SIMIBI class G3E GTPase family. UreG subfamily. As to quaternary structure, homodimer. UreD, UreF and UreG form a complex that acts as a GTP-hydrolysis-dependent molecular chaperone, activating the urease apoprotein by helping to assemble the nickel containing metallocenter of UreC. The UreE protein probably delivers the nickel.

The protein localises to the cytoplasm. In terms of biological role, facilitates the functional incorporation of the urease nickel metallocenter. This process requires GTP hydrolysis, probably effectuated by UreG. In Corynebacterium glutamicum (strain R), this protein is Urease accessory protein UreG.